The sequence spans 370 residues: Forkhead box protein J1.2 (370 aa).

A disordered region spans residues 45 to 74; the sequence is ANSRPPVPRVSQGPCSPPAGDTASCQAPRT. Positions 108–202 form a DNA-binding region, fork-head; that stretch reads KPPYSYATLI…VNGVLKRRRM (95 aa). Residues 227–246 are disordered; it reads PGSHHMQHISGGHRQSRRYE.

The protein belongs to the FOXJ1 family.

The protein resides in the nucleus. In terms of biological role, key transcription factor required for motile ciliogenesis. Activates genes essential for motile cilia formation and function. This Xenopus laevis (African clawed frog) protein is Forkhead box protein J1.2.